The sequence spans 682 residues: Protein ACTIVITY OF BC1 COMPLEX KINASE 1, chloroplastic (682 aa).

Residues methionine 1–threonine 79 constitute a chloroplast transit peptide. The region spanning lysine 236–phenylalanine 567 is the Protein kinase domain. ATP contacts are provided by residues isoleucine 242–valine 250 and lysine 265. The active-site Proton acceptor is the aspartate 400.

The protein belongs to the protein kinase superfamily. ADCK protein kinase family. In terms of assembly, interacts with ABC1K3 in plastoglobules (PG). Expressed in all tissues (e.g. especially in leaves) at all developmental stages from seed germination to flowering, except in the root tips.

Its subcellular location is the plastid. The protein localises to the chloroplast. It localises to the plastoglobule. It catalyses the reaction L-seryl-[protein] + ATP = O-phospho-L-seryl-[protein] + ADP + H(+). The enzyme catalyses L-threonyl-[protein] + ATP = O-phospho-L-threonyl-[protein] + ADP + H(+). Functionally, kinase that can phosphorylate the tocopherol cyclase VTE1, a key enzyme of tocopherol (vitamin E) metabolism and involved in the recycling of oxidated alpha-tocopherol quinone, possibly stabilizing it at plastoglobules. Also regulates plastoglobule protein composition. Prevents photodamage of chloroplasts under continuous red light, thus working in opposition to ABC1K3. Together with ABC1K1, contributes to plastoglobule (PG) function in prenyl-lipid metabolism, stress response, and thylakoid remodeling. Involved in chlorophyll degradation and in the maintenance of the number of chlorophyll-binding photosynthetic thylakoid membranes. Ensures photosynthetic electron transport by regulating the homeostasis of plastoquinone, beta-carotene and xanthophyll lutein, as well as membrane antioxidant tocopherol metabolism. Seems to affect specifically stability or turnover of D1 protein, product of psbA, one of the four core subunits of the photosystem II (PSII). Required for photooxidative stress responses, including the induction of oxidative stress response genes (e.g. FSD1, CSD1, CAT1, and UTG71C1), to prevent photosystem II core and chlorophyll degradations. This chain is Protein ACTIVITY OF BC1 COMPLEX KINASE 1, chloroplastic, found in Arabidopsis thaliana (Mouse-ear cress).